The chain runs to 201 residues: MRLFVGLGNPGAKYARNRHNIGFMAVDEIARRHGFSPWRRRFQGETSEGALGTERVILLKPTTYMNDSGRSVQEAAGFFKIAPGDVTVFHDELELPPGKVRVKVGGGIAGHNGLRSISAHIGNDYRRVRLGIGHPGVKELVHGHVLSDFAKADNDWVATLCDAVAEHAALIAKGTDATFANRVHLAMQAKGFLTKDDNGKE.

Position 14 (Y14) interacts with tRNA. H19 (proton acceptor) is an active-site residue. Y64, N66, and N112 together coordinate tRNA.

The protein belongs to the PTH family. As to quaternary structure, monomer.

The protein localises to the cytoplasm. The enzyme catalyses an N-acyl-L-alpha-aminoacyl-tRNA + H2O = an N-acyl-L-amino acid + a tRNA + H(+). Its function is as follows. Hydrolyzes ribosome-free peptidyl-tRNAs (with 1 or more amino acids incorporated), which drop off the ribosome during protein synthesis, or as a result of ribosome stalling. Catalyzes the release of premature peptidyl moieties from peptidyl-tRNA molecules trapped in stalled 50S ribosomal subunits, and thus maintains levels of free tRNAs and 50S ribosomes. The sequence is that of Peptidyl-tRNA hydrolase from Bradyrhizobium diazoefficiens (strain JCM 10833 / BCRC 13528 / IAM 13628 / NBRC 14792 / USDA 110).